A 193-amino-acid polypeptide reads, in one-letter code: Cytidylate kinase (193 aa).

ATP is bound at residue 12–20; sequence GLPGSGTTT.

This sequence belongs to the cytidylate kinase family. Type 2 subfamily.

It is found in the cytoplasm. The enzyme catalyses CMP + ATP = CDP + ADP. It carries out the reaction dCMP + ATP = dCDP + ADP. The protein is Cytidylate kinase of Methanopyrus kandleri (strain AV19 / DSM 6324 / JCM 9639 / NBRC 100938).